Here is a 209-residue protein sequence, read N- to C-terminus: uncharacterized protein (209 aa).

The signal sequence occupies residues Met-1–Ala-19. Asn-41 and Asn-109 each carry an N-linked (GlcNAc...) asparagine glycan.

Component of the acid-soluble organic matrix of prismatic shell layers (at protein level).

The protein resides in the secreted. This is an uncharacterized protein from Haliotis asinina (Donkey's ear abalone).